The chain runs to 266 residues: Glucosamine-6-phosphate deaminase (266 aa).

Catalysis depends on aspartate 72, which acts as the Proton acceptor; for enolization step. Aspartate 141 functions as the For ring-opening step in the catalytic mechanism. The active-site Proton acceptor; for ring-opening step is the histidine 143. Catalysis depends on glutamate 148, which acts as the For ring-opening step.

It belongs to the glucosamine/galactosamine-6-phosphate isomerase family. NagB subfamily. As to quaternary structure, homohexamer; trimer of disulfide-linked dimers.

The catalysed reaction is alpha-D-glucosamine 6-phosphate + H2O = beta-D-fructose 6-phosphate + NH4(+). The protein operates within amino-sugar metabolism; N-acetylneuraminate degradation; D-fructose 6-phosphate from N-acetylneuraminate: step 5/5. Allosterically activated by N-acetylglucosamine 6-phosphate (GlcNAc6P). Functionally, catalyzes the reversible isomerization-deamination of glucosamine 6-phosphate (GlcN6P) to form fructose 6-phosphate (Fru6P) and ammonium ion. This chain is Glucosamine-6-phosphate deaminase, found in Shigella dysenteriae serotype 1 (strain Sd197).